The chain runs to 932 residues: MARHSVMYFILLSALIDKSQACFCDHYPWSQWSSCSKTCNSGTQTRQRRIVTDKYYFENFCGQLCTKQESRECNWQTCPINCRLGDYGPWSDCDPCVQKRFKVRSILRPSQFGGQPCTEPLMTFQPCIPSKLCKIEEIDCKNKFRCDSGRCIASKLECNGENDCGDNSDERNCGRKKTVCSRSHNPIPGVQLMGMGFHFLAGEPRGEVLDNSFTGGVCRTVKSSRASNPYRVPANLENVNFEVQTKEDDLEADFYDDLIPLEDNKDQEALGSGLATSSFRVPIFYSSKRSQSSSHSSAFKQAIQASQKKASSFIRIHKVIKVLNFTMKTKDLQLSDVFLKALNHLPLEYNSALYSRIFDDFGTHYFTSGSLGGVYDLLYQFSKEELKNSGLTQEEAKNCIRIETKKRFLFVKKTKVEHRCTTNKLSEKYEGSFMQGSEKSISLVQGGRSAYAAALAWEKGSPVPEERVFSDWLESVKENPSVIDFALAPITDLVRNIPCAVTRRNNLRRAFREYAAKFDPCQCARCPNSGRPVLSGTECLCVCQSGTYGENCERRSPDYKSNAVDGNWGCWSSWSSCDATYRRSRTRECNNPAPQQGGKRCEGERRQEEHCTFSIMQNDGQPCISDDEDMKETDLPELESDSGCPQPVPPENGFIRNEKKQYSVGEEVEILCFTGFKAVGYQYFRCLPDRSWRQGDVECQRTECLKPIVPEGLTLSPFQTLYKIGDSIELTCPRGLVVNGPSRYTCSGDSWTPPISDSLSCEKDVLTGLRGHCQPGQKQLGSECVCMSPEEDCGHYSEEICVLDTTSSDYFTSSACKLLAEKCLNNQQLHFVHIGSCEEGPQLKWGLERIKLSSSSTKNESCGYDTCYNWEKCSATTSKCVCLLPSQCTKGGDQLFCVQIGSSANGKTMNICEVGAVKCAKREMEILHSGRC.

Residues 1-21 form the signal peptide; it reads MARHSVMYFILLSALIDKSQA. Disulfide bonds link C22–C61, C24–C65, C35–C73, C39–C78, C82–C117, C93–C127, C96–C133, C140–C151, C146–C164, C158–C173, and C180–C218. TSP type-1 domains are found at residues 22-79 and 81-134; these read CFCD…QTCP and NCRL…KLCK. Residues W29 and W32 are each glycosylated (C-linked (Man) tryptophan). A glycan (O-linked (Fuc...) threonine) is linked at T38. A glycan (C-linked (Man) tryptophan) is linked at W90. The region spanning 139-174 is the LDL-receptor class A domain; the sequence is DCKNKFRCDSGRCIASKLECNGENDCGDNSDERNCG. Ca(2+)-binding residues include L156, N159, E161, D163, D169, and E170. Positions 176 to 522 constitute an MACPF domain; sequence KKTVCSRSHN…EYAAKFDPCQ (347 aa). The beta stranded transmembrane segment at 278–290 threads the bilayer; the sequence is SFRVPIFYSSKRS. N324 carries an N-linked (GlcNAc...) asparagine glycan. T392 is a glycosylation site (O-linked (Fuc...) threonine). Intrachain disulfides connect C399–C420, C499–C623, C521–C570, C523–C539, C526–C541, C543–C552, C577–C611, C589–C601, C644–C686, C672–C699, C704–C746, C732–C761, C773–C823, C784–C801, C786–C837, and C793–C816. The beta stranded transmembrane segment at 402–415 threads the bilayer; the sequence is IETKKRFLFVKKTK. The region spanning 523–553 is the EGF-like domain; it reads CARCPNSGRPVLSGTECLCVCQSGTYGENCE. A TSP type-1 3 domain is found at 565–612; that stretch reads DGNWGCWSSWSSCDATYRRSRTRECNNPAPQQGGKRCEGERRQEEHCT. C-linked (Man) tryptophan glycans are attached at residues W568, W571, and W574. CCP stretches follow at residues 611–688 and 689–765; these read CTFS…RCLP and DRSW…EKDV. Sushi domains lie at 642–701 and 702–763; these read SGCP…ECQR and TECL…SCEK. The C5b-binding domain stretch occupies residues 642–932; the sequence is SGCPQPVPPE…EMEILHSGRC (291 aa). Factor I module (FIM) stretches follow at residues 766–840 and 858–932; these read LTGL…CEEG and KNES…SGRC. The region spanning 780–839 is the Kazal-like 1 domain; sequence LGSECVCMSPEEDCGHYSEEICVLDTTSSDYFTSSACKLLAEKCLNNQQLHFVHIGSCEE. N859 is a glycosylation site (N-linked (GlcNAc...) asparagine). Intrachain disulfides connect C862–C873, C867–C919, C880–C897, C882–C932, and C888–C912. The region spanning 876–932 is the Kazal-like 2 domain; it reads TTSKCVCLLPSQCTKGGDQLFCVQIGSSANGKTMNICEVGAVKCAKREMEILHSGRC.

It belongs to the complement C6/C7/C8/C9 family. Component of the membrane attack complex (MAC), composed of complement C5b, C6, C7, C8A, C8B, C8G and multiple copies of the pore-forming subunit C9. In terms of processing, all cysteine residues are assumed to be cross-linked to one another. Individual modules containing an even number of conserved cysteine residues are supposed to have disulfide linkages only within the same module.

The protein resides in the secreted. It is found in the target cell membrane. Its activity is regulated as follows. Membrane attack complex (MAC) assembly is inhibited by CD59, thereby protecting self-cells from damage during complement activation. MAC assembly is also inhibited by clusterin (CLU) chaperones that inhibit polymerization of C9. Component of the membrane attack complex (MAC), a multiprotein complex activated by the complement cascade, which inserts into a target cell membrane and forms a pore, leading to target cell membrane rupture and cell lysis. The MAC is initiated by proteolytic cleavage of C5 into complement C5b in response to the classical, alternative, lectin and GZMK complement pathways. The complement pathways consist in a cascade of proteins that leads to phagocytosis and breakdown of pathogens and signaling that strengthens the adaptive immune system. Together with component C5b, involved in MAC complex assembly: complement C5b and C6 associate with the outer leaflet of target cell membrane, reducing the energy for membrane bending. In Bos taurus (Bovine), this protein is Complement component C6 (C6).